The sequence spans 222 residues: V-type ATP synthase subunit D (222 aa).

The protein belongs to the V-ATPase D subunit family.

Produces ATP from ADP in the presence of a proton gradient across the membrane. This is V-type ATP synthase subunit D from Deinococcus geothermalis (strain DSM 11300 / CIP 105573 / AG-3a).